Here is a 254-residue protein sequence, read N- to C-terminus: Proteasome activator complex subunit 3 (254 aa).

Ala-2 carries the N-acetylalanine modification. Residues Ser-17 and Ser-24 each carry the phosphoserine modification. Lys-195 is modified (N6-acetyllysine; by P300/CBP). Ser-247 is modified (phosphoserine; by CHEK2).

The protein belongs to the PA28 family. Homoheptamer; the stability of the heptamer is essential for the specific activation of the trypsine-like subunit and inhibition of the chymotrypsin-like and postglutamyl-preferring (PGPH) subunits of the proteasome. Interacts with p53/TP53, MDM2 and MAP3K3. Associates with the proteasome. Interacts with CCAR2. Interacts with PSME3IP1 (via C-terminus); the interaction is direct and promotes the association of PSME3 with the 20S proteasome. Interacts with COIL; the interaction is inhibited by PSME3IP1. Post-translationally, phosphorylated by MAP3K3. Phosphorylation at Ser-247 promotes its association with CCAR2. In terms of processing, acetylation at the major site Lys-195 is important for oligomerization and ability to degrade its target substrates. Deacetylated by SIRT1.

It localises to the nucleus. The protein resides in the cytoplasm. In terms of biological role, subunit of the 11S REG-gamma (also called PA28-gamma) proteasome regulator, a doughnut-shaped homoheptamer which associates with the proteasome. 11S REG-gamma activates the trypsin-like catalytic subunit of the proteasome but inhibits the chymotrypsin-like and postglutamyl-preferring (PGPH) subunits. Facilitates the MDM2-p53/TP53 interaction which promotes ubiquitination- and MDM2-dependent proteasomal degradation of p53/TP53, limiting its accumulation and resulting in inhibited apoptosis after DNA damage. May also be involved in cell cycle regulation. Mediates CCAR2 and CHEK2-dependent SIRT1 inhibition. This is Proteasome activator complex subunit 3 (PSME3) from Pongo abelii (Sumatran orangutan).